The following is a 251-amino-acid chain: 5'-nucleotidase SurE (251 aa).

A divalent metal cation is bound by residues aspartate 8, aspartate 9, serine 39, and asparagine 95.

It belongs to the SurE nucleotidase family. The cofactor is a divalent metal cation.

The protein localises to the cytoplasm. The catalysed reaction is a ribonucleoside 5'-phosphate + H2O = a ribonucleoside + phosphate. In terms of biological role, nucleotidase that shows phosphatase activity on nucleoside 5'-monophosphates. In Clostridium botulinum (strain Eklund 17B / Type B), this protein is 5'-nucleotidase SurE.